Reading from the N-terminus, the 213-residue chain is N-(5'-phosphoribosyl)anthranilate isomerase (213 aa).

Belongs to the TrpF family.

The catalysed reaction is N-(5-phospho-beta-D-ribosyl)anthranilate = 1-(2-carboxyphenylamino)-1-deoxy-D-ribulose 5-phosphate. It functions in the pathway amino-acid biosynthesis; L-tryptophan biosynthesis; L-tryptophan from chorismate: step 3/5. This is N-(5'-phosphoribosyl)anthranilate isomerase from Rhodopseudomonas palustris (strain ATCC BAA-98 / CGA009).